A 162-amino-acid polypeptide reads, in one-letter code: Circumsporozoite protein-related antigen (162 aa).

The signal sequence occupies residues 1 to 16; the sequence is MKILSVFFLALFFIIF. 2 disordered regions span residues 24–44 and 109–162; these read KTNK…KGSG and PFKI…GPEH. Positions 114–130 are enriched in low complexity; it reads SSDPADNANPDADSESN. The span at 137–162 shows a compositional bias: polar residues; it reads PQVTAQDVTPEQPQGDDNNLVSGPEH.

In Plasmodium falciparum, this protein is Circumsporozoite protein-related antigen.